Consider the following 132-residue polypeptide: Ribosome-binding factor A (132 aa).

It belongs to the RbfA family. Monomer. Binds 30S ribosomal subunits, but not 50S ribosomal subunits or 70S ribosomes.

The protein resides in the cytoplasm. In terms of biological role, one of several proteins that assist in the late maturation steps of the functional core of the 30S ribosomal subunit. Associates with free 30S ribosomal subunits (but not with 30S subunits that are part of 70S ribosomes or polysomes). Required for efficient processing of 16S rRNA. May interact with the 5'-terminal helix region of 16S rRNA. The polypeptide is Ribosome-binding factor A (Prochlorococcus marinus subsp. pastoris (strain CCMP1986 / NIES-2087 / MED4)).